The chain runs to 470 residues: mRNA export factor ICP27 homolog (470 aa).

Disordered regions lie at residues 1–31 (MALS…TGGD) and 73–202 (FSAS…AGDR). A compositionally biased stretch (polar residues) spans 73–85 (FSASPQRAQPSNP). Basic residues-rich tracts occupy residues 94-107 (HGRR…RRNN) and 178-187 (RVHRNRRRGN). Residues Cys359, His437, Cys441, and Cys446 each coordinate Zn(2+). A CHC2-type zinc finger spans residues 359-446 (CYLSSSGSPT…HKRRCKADTC (88 aa)).

Belongs to the HHV-1 ICP27 protein family. Homodimer. Homodimerization is required for transactivation. Associates in a complex with RNA, and host export factors NXF1/TAP and ALYREF; these interactions allow nuclear export of viral transcripts. Interacts with three host shuttling SR proteins SRSF1, SRSF3 and SRSF7. Interacts with host SRPK1. Interacts with IE62; this interaction enhances IE62 transactivation.

The protein localises to the host cytoplasm. Its subcellular location is the host nucleus. Multifunctional regulator of the expression of viral genes that mediates nuclear export of viral intronless mRNAs. This immediate early (EI) protein promotes the nuclear export of viral intronless mRNAs by interacting with mRNAs and host NXF1/TAP. This is mRNA export factor ICP27 homolog from Equine herpesvirus 1 (strain Kentucky A) (EHV-1).